Consider the following 148-residue polypeptide: Large ribosomal subunit protein bL9 (148 aa).

It belongs to the bacterial ribosomal protein bL9 family.

In terms of biological role, binds to the 23S rRNA. This Agathobacter rectalis (strain ATCC 33656 / DSM 3377 / JCM 17463 / KCTC 5835 / VPI 0990) (Eubacterium rectale) protein is Large ribosomal subunit protein bL9.